A 302-amino-acid polypeptide reads, in one-letter code: tRNA pseudouridine synthase B (302 aa).

D42 (nucleophile) is an active-site residue.

The protein belongs to the pseudouridine synthase TruB family. Type 1 subfamily.

It catalyses the reaction uridine(55) in tRNA = pseudouridine(55) in tRNA. In terms of biological role, responsible for synthesis of pseudouridine from uracil-55 in the psi GC loop of transfer RNAs. This Leifsonia xyli subsp. xyli (strain CTCB07) protein is tRNA pseudouridine synthase B.